We begin with the raw amino-acid sequence, 220 residues long: Thiamine-phosphate synthase (220 aa).

4-amino-2-methyl-5-(diphosphooxymethyl)pyrimidine-binding positions include 47-51 and Asn-78; that span reads QYREK. Mg(2+) contacts are provided by Asp-79 and Asp-98. Ser-117 contacts 4-amino-2-methyl-5-(diphosphooxymethyl)pyrimidine. Residue 143 to 145 participates in 2-[(2R,5Z)-2-carboxy-4-methylthiazol-5(2H)-ylidene]ethyl phosphate binding; sequence TAT. Position 146 (Lys-146) interacts with 4-amino-2-methyl-5-(diphosphooxymethyl)pyrimidine. Residues Gly-174 and 194–195 contribute to the 2-[(2R,5Z)-2-carboxy-4-methylthiazol-5(2H)-ylidene]ethyl phosphate site; that span reads IS.

It belongs to the thiamine-phosphate synthase family. Mg(2+) serves as cofactor.

The catalysed reaction is 2-[(2R,5Z)-2-carboxy-4-methylthiazol-5(2H)-ylidene]ethyl phosphate + 4-amino-2-methyl-5-(diphosphooxymethyl)pyrimidine + 2 H(+) = thiamine phosphate + CO2 + diphosphate. It catalyses the reaction 2-(2-carboxy-4-methylthiazol-5-yl)ethyl phosphate + 4-amino-2-methyl-5-(diphosphooxymethyl)pyrimidine + 2 H(+) = thiamine phosphate + CO2 + diphosphate. The enzyme catalyses 4-methyl-5-(2-phosphooxyethyl)-thiazole + 4-amino-2-methyl-5-(diphosphooxymethyl)pyrimidine + H(+) = thiamine phosphate + diphosphate. Its pathway is cofactor biosynthesis; thiamine diphosphate biosynthesis; thiamine phosphate from 4-amino-2-methyl-5-diphosphomethylpyrimidine and 4-methyl-5-(2-phosphoethyl)-thiazole: step 1/1. Its function is as follows. Condenses 4-methyl-5-(beta-hydroxyethyl)thiazole monophosphate (THZ-P) and 2-methyl-4-amino-5-hydroxymethyl pyrimidine pyrophosphate (HMP-PP) to form thiamine monophosphate (TMP). In Methanosarcina barkeri (strain Fusaro / DSM 804), this protein is Thiamine-phosphate synthase.